A 282-amino-acid polypeptide reads, in one-letter code: 2-dehydro-3-deoxyphosphooctonate aldolase (282 aa).

Belongs to the KdsA family.

It is found in the cytoplasm. The catalysed reaction is D-arabinose 5-phosphate + phosphoenolpyruvate + H2O = 3-deoxy-alpha-D-manno-2-octulosonate-8-phosphate + phosphate. The protein operates within carbohydrate biosynthesis; 3-deoxy-D-manno-octulosonate biosynthesis; 3-deoxy-D-manno-octulosonate from D-ribulose 5-phosphate: step 2/3. It functions in the pathway bacterial outer membrane biogenesis; lipopolysaccharide biosynthesis. The chain is 2-dehydro-3-deoxyphosphooctonate aldolase from Shewanella sp. (strain MR-4).